The following is a 206-amino-acid chain: Large ribosomal subunit protein uL3 (206 aa).

It belongs to the universal ribosomal protein uL3 family. Part of the 50S ribosomal subunit. Forms a cluster with proteins L14 and L19.

Its function is as follows. One of the primary rRNA binding proteins, it binds directly near the 3'-end of the 23S rRNA, where it nucleates assembly of the 50S subunit. The sequence is that of Large ribosomal subunit protein uL3 from Thermus thermophilus (strain ATCC BAA-163 / DSM 7039 / HB27).